Reading from the N-terminus, the 177-residue chain is Ribosome maturation factor RimM (177 aa).

Residues 101-174 (EGEFHLLDLV…WLLLTPPPGL (74 aa)) enclose the PRC barrel domain.

The protein belongs to the RimM family. Binds ribosomal protein uS19.

The protein localises to the cytoplasm. In terms of biological role, an accessory protein needed during the final step in the assembly of 30S ribosomal subunit, possibly for assembly of the head region. Essential for efficient processing of 16S rRNA. May be needed both before and after RbfA during the maturation of 16S rRNA. It has affinity for free ribosomal 30S subunits but not for 70S ribosomes. This Synechococcus sp. (strain CC9605) protein is Ribosome maturation factor RimM.